Consider the following 103-residue polypeptide: Large ribosomal subunit protein uL24 (103 aa).

The protein belongs to the universal ribosomal protein uL24 family. Part of the 50S ribosomal subunit.

Functionally, one of two assembly initiator proteins, it binds directly to the 5'-end of the 23S rRNA, where it nucleates assembly of the 50S subunit. Its function is as follows. One of the proteins that surrounds the polypeptide exit tunnel on the outside of the subunit. This Bacillus mycoides (strain KBAB4) (Bacillus weihenstephanensis) protein is Large ribosomal subunit protein uL24.